The following is a 338-amino-acid chain: RNA 3'-terminal phosphate cyclase (338 aa).

ATP contacts are provided by residues glutamine 103 and 283 to 287 (YLADQ). Histidine 308 functions as the Tele-AMP-histidine intermediate in the catalytic mechanism.

It belongs to the RNA 3'-terminal cyclase family. Type 1 subfamily.

Its subcellular location is the cytoplasm. The enzyme catalyses a 3'-end 3'-phospho-ribonucleotide-RNA + ATP = a 3'-end 2',3'-cyclophospho-ribonucleotide-RNA + AMP + diphosphate. Catalyzes the conversion of 3'-phosphate to a 2',3'-cyclic phosphodiester at the end of RNA. The mechanism of action of the enzyme occurs in 3 steps: (A) adenylation of the enzyme by ATP; (B) transfer of adenylate to an RNA-N3'P to produce RNA-N3'PP5'A; (C) and attack of the adjacent 2'-hydroxyl on the 3'-phosphorus in the diester linkage to produce the cyclic end product. The biological role of this enzyme is unknown but it is likely to function in some aspects of cellular RNA processing. The sequence is that of RNA 3'-terminal phosphate cyclase from Shigella boydii serotype 18 (strain CDC 3083-94 / BS512).